The primary structure comprises 360 residues: Phospho-N-acetylmuramoyl-pentapeptide-transferase (360 aa).

10 consecutive transmembrane segments (helical) span residues I27–W47, T73–L93, S94–V114, W132–G152, V168–S188, G199–T219, A236–F256, V263–L283, F288–V308, and V338–K358.

It belongs to the glycosyltransferase 4 family. MraY subfamily. It depends on Mg(2+) as a cofactor.

The protein resides in the cell inner membrane. The enzyme catalyses UDP-N-acetyl-alpha-D-muramoyl-L-alanyl-gamma-D-glutamyl-meso-2,6-diaminopimeloyl-D-alanyl-D-alanine + di-trans,octa-cis-undecaprenyl phosphate = di-trans,octa-cis-undecaprenyl diphospho-N-acetyl-alpha-D-muramoyl-L-alanyl-D-glutamyl-meso-2,6-diaminopimeloyl-D-alanyl-D-alanine + UMP. It participates in cell wall biogenesis; peptidoglycan biosynthesis. Its function is as follows. Catalyzes the initial step of the lipid cycle reactions in the biosynthesis of the cell wall peptidoglycan: transfers peptidoglycan precursor phospho-MurNAc-pentapeptide from UDP-MurNAc-pentapeptide onto the lipid carrier undecaprenyl phosphate, yielding undecaprenyl-pyrophosphoryl-MurNAc-pentapeptide, known as lipid I. The sequence is that of Phospho-N-acetylmuramoyl-pentapeptide-transferase from Pectobacterium atrosepticum (strain SCRI 1043 / ATCC BAA-672) (Erwinia carotovora subsp. atroseptica).